The sequence spans 452 residues: Diphthine methyltransferase (452 aa).

7 WD repeats span residues 79 to 130, 131 to 185, 186 to 229, 230 to 273, 274 to 313, 314 to 403, and 404 to 448; these read PLVE…SHVL, EPLS…RPRL, QKVA…RVPG, KFLF…RNMK, QPLADTPVQGGVWRIKWHPFHHHLLLAACMHSGFKILNCQ, KAME…TEGM, and RKNG…HLWE. At serine 353 the chain carries Phosphoserine. The disordered stretch occupies residues 371–402; that stretch reads SELPTPCHECREDNDGEGHARPQSGMKPLTEG. A compositionally biased stretch (basic and acidic residues) spans 378–390; that stretch reads HECREDNDGEGHA.

This sequence belongs to the DPH7 family. As to quaternary structure, interacts with INCA1.

The catalysed reaction is diphthine methyl ester-[translation elongation factor 2] + H2O = diphthine-[translation elongation factor 2] + methanol + H(+). The protein operates within protein modification; peptidyl-diphthamide biosynthesis. In terms of biological role, catalyzes the demethylation of diphthine methyl ester to form diphthine, an intermediate diphthamide biosynthesis, a post-translational modification of histidine which occurs in translation elongation factor 2 (EEF2) which can be ADP-ribosylated by diphtheria toxin and by Pseudomonas exotoxin A (Eta). In Homo sapiens (Human), this protein is Diphthine methyltransferase (DPH7).